Here is a 442-residue protein sequence, read N- to C-terminus: DDB1- and CUL4-associated factor 12-B (442 aa).

Over residues M1 to T13 the composition is skewed to basic residues. The tract at residues M1–R31 is disordered. WD repeat units follow at residues S132–V173, G177–R215, P245–L284, and E333–D370.

It belongs to the WD repeat DCAF12 family. Component of the DCX(DCAF12) E3 ubiquitin ligase complex, at least composed of cul4 (cul4a or cul4b), ddb1, dcaf12 and rbx1.

It is found in the cytoplasm. The protein localises to the cytoskeleton. The protein resides in the microtubule organizing center. It localises to the centrosome. Its subcellular location is the nucleus. It functions in the pathway protein modification; protein ubiquitination. Its function is as follows. Substrate-recognition component of a DCX (DDB1-CUL4-X-box) E3 ubiquitin-protein ligase complex of the DesCEND (destruction via C-end degrons) pathway, which recognizes a C-degron located at the extreme C terminus of target proteins, leading to their ubiquitination and degradation. The C-degron recognized by the DesCEND pathway is usually a motif of less than ten residues and can be present in full-length proteins, truncated proteins or proteolytically cleaved forms. The DCX(DCAF12) complex specifically recognizes proteins with a diglutamate (Glu-Glu) at the C-terminus leading to their ubiquitination and degradation. Also directly recognizes the C-terminal glutamate-leucine (Glu-Leu) degron as an alternative degron in proteins leading to their ubiquitination and degradation. The protein is DDB1- and CUL4-associated factor 12-B (dcaf12-b) of Xenopus laevis (African clawed frog).